Here is a 136-residue protein sequence, read N- to C-terminus: Pterin-4-alpha-carbinolamine dehydratase 2 (136 aa).

Residues Lys-120, Lys-124, and Lys-131 each carry the N6-acetyllysine; alternate modification. N6-succinyllysine; alternate occurs at positions 120, 124, and 131.

This sequence belongs to the pterin-4-alpha-carbinolamine dehydratase family. Homotetramer. Interacts with DYRK1B.

The enzyme catalyses (4aS,6R)-4a-hydroxy-L-erythro-5,6,7,8-tetrahydrobiopterin = (6R)-L-erythro-6,7-dihydrobiopterin + H2O. Functionally, involved in tetrahydrobiopterin biosynthesis. Seems to both prevent the formation of 7-pterins and accelerate the formation of quinonoid-BH2. Its function is as follows. Regulates the dimerization of homeodomain protein HNF-1-alpha and enhances its transcriptional activity. This is Pterin-4-alpha-carbinolamine dehydratase 2 (Pcbd2) from Mus musculus (Mouse).